A 264-amino-acid chain; its full sequence is 1H-3-hydroxy-4-oxoquinoline 2,4-dioxygenase (264 aa).

Residues 30–32 (WCQ), 94–95 (TS), and W153 each bind substrate. The Proton donor/acceptor role is filled by H244.

The protein belongs to the AB hydrolase superfamily. The cofactor is None. Contrary to most other dioxygenases, this enzyme does not require a cofactor for catalysis..

It carries out the reaction 3-hydroxy-1H-quinolin-4-one + O2 = N-formylanthranilate + CO + H(+). Functionally, ring-cleaving dioxygenase involved in oxoquinoline degradation and utilization. The chain is 1H-3-hydroxy-4-oxoquinoline 2,4-dioxygenase (qdo) from Pseudomonas putida (Arthrobacter siderocapsulatus).